The following is a 512-amino-acid chain: 2-isopropylmalate synthase (512 aa).

The Pyruvate carboxyltransferase domain maps to 5–268; sequence LIIFDTTLRD…DIGIDTQQIL (264 aa). Mn(2+)-binding residues include Asp14, His202, His204, and Asn239. The tract at residues 394 to 512 is regulatory domain; that stretch reads GFVSLSQHSE…SKADRVAAQG (119 aa).

Belongs to the alpha-IPM synthase/homocitrate synthase family. LeuA type 1 subfamily. As to quaternary structure, homodimer. Mn(2+) serves as cofactor.

Its subcellular location is the cytoplasm. The catalysed reaction is 3-methyl-2-oxobutanoate + acetyl-CoA + H2O = (2S)-2-isopropylmalate + CoA + H(+). It functions in the pathway amino-acid biosynthesis; L-leucine biosynthesis; L-leucine from 3-methyl-2-oxobutanoate: step 1/4. In terms of biological role, catalyzes the condensation of the acetyl group of acetyl-CoA with 3-methyl-2-oxobutanoate (2-ketoisovalerate) to form 3-carboxy-3-hydroxy-4-methylpentanoate (2-isopropylmalate). The chain is 2-isopropylmalate synthase from Polaromonas naphthalenivorans (strain CJ2).